The primary structure comprises 129 residues: Fluoride-specific ion channel FluC 2 (129 aa).

The next 4 helical transmembrane spans lie at 3-23, 32-52, 59-79, and 90-110; these read FLYVGIFGALGGMCRYAMNLW, ATLAVNLIGCFLLAFIMPFLA, LVLLNGIGTGFIGAFTTFSAF, and GEVVLAISYILVSLIGGLVMV. G71 and T74 together coordinate Na(+).

Belongs to the fluoride channel Fluc/FEX (TC 1.A.43) family.

The protein resides in the cell membrane. It catalyses the reaction fluoride(in) = fluoride(out). Na(+) is not transported, but it plays an essential structural role and its presence is essential for fluoride channel function. In terms of biological role, fluoride-specific ion channel. Important for reducing fluoride concentration in the cell, thus reducing its toxicity. The sequence is that of Fluoride-specific ion channel FluC 2 from Listeria innocua serovar 6a (strain ATCC BAA-680 / CLIP 11262).